A 359-amino-acid polypeptide reads, in one-letter code: 5-formaminoimidazole-4-carboxamide-1-(beta)-D-ribofuranosyl 5'-monophosphate synthetase (359 aa).

Histidine 27 and serine 94 together coordinate 5-amino-1-(5-phospho-beta-D-ribosyl)imidazole-4-carboxamide. Positions 116 to 340 constitute an ATP-grasp domain; it reads RRLLRWESER…FGEIVTMGRR (225 aa). Residues 146 to 208 and glutamate 230 contribute to the ATP site; that span reads PEDI…TNFC. Residue asparagine 258 coordinates 5-amino-1-(5-phospho-beta-D-ribosyl)imidazole-4-carboxamide. Mg(2+)-binding residues include glutamine 297 and glutamate 310.

This sequence belongs to the phosphohexose mutase family. Requires Mg(2+) as cofactor. Mn(2+) is required as a cofactor.

The catalysed reaction is 5-amino-1-(5-phospho-beta-D-ribosyl)imidazole-4-carboxamide + formate + ATP = 5-formamido-1-(5-phospho-D-ribosyl)imidazole-4-carboxamide + ADP + phosphate. Its pathway is purine metabolism; IMP biosynthesis via de novo pathway; 5-formamido-1-(5-phospho-D-ribosyl)imidazole-4-carboxamide from 5-amino-1-(5-phospho-D-ribosyl)imidazole-4-carboxamide (formate route): step 1/1. Its function is as follows. Catalyzes the ATP- and formate-dependent formylation of 5-aminoimidazole-4-carboxamide-1-beta-d-ribofuranosyl 5'-monophosphate (AICAR) to 5-formaminoimidazole-4-carboxamide-1-beta-d-ribofuranosyl 5'-monophosphate (FAICAR) in the absence of folates. The polypeptide is 5-formaminoimidazole-4-carboxamide-1-(beta)-D-ribofuranosyl 5'-monophosphate synthetase (Methanopyrus kandleri (strain AV19 / DSM 6324 / JCM 9639 / NBRC 100938)).